We begin with the raw amino-acid sequence, 201 residues long: Peptide deformylase (201 aa).

A disordered region spans residues 1 to 21 (MANHFSQLAKKSRTNGNAEKI). Fe cation-binding residues include C121 and H163. Residue E164 is part of the active site. H167 is a Fe cation binding site.

The protein belongs to the polypeptide deformylase family. Fe(2+) serves as cofactor.

The catalysed reaction is N-terminal N-formyl-L-methionyl-[peptide] + H2O = N-terminal L-methionyl-[peptide] + formate. Removes the formyl group from the N-terminal Met of newly synthesized proteins. Requires at least a dipeptide for an efficient rate of reaction. N-terminal L-methionine is a prerequisite for activity but the enzyme has broad specificity at other positions. The protein is Peptide deformylase of Prochlorococcus marinus (strain AS9601).